The sequence spans 95 residues: Acylphosphatase (95 aa).

In terms of domain architecture, Acylphosphatase-like spans 10–95; it reads CIHATVSGKV…VEDYSDFRVR (86 aa). Residues Arg-25 and Asn-43 contribute to the active site.

This sequence belongs to the acylphosphatase family.

It carries out the reaction an acyl phosphate + H2O = a carboxylate + phosphate + H(+). In Coxiella burnetii (strain Dugway 5J108-111), this protein is Acylphosphatase (acyP).